The primary structure comprises 265 residues: tRNA (guanine-N(7)-)-methyltransferase (265 aa).

The interval 1–40 is disordered; that stretch reads MIHDDDPNAPGAPHDDDATAAPASATRAAPAAGDDDDANP. A compositionally biased stretch (low complexity) spans 19–32; sequence TAAPASATRAAPAA. Positions 95, 120, 147, and 170 each coordinate S-adenosyl-L-methionine. Aspartate 170 is an active-site residue. Substrate-binding positions include lysine 174, aspartate 206, and 241–244; that span reads TKFE.

The protein belongs to the class I-like SAM-binding methyltransferase superfamily. TrmB family.

It carries out the reaction guanosine(46) in tRNA + S-adenosyl-L-methionine = N(7)-methylguanosine(46) in tRNA + S-adenosyl-L-homocysteine. Its pathway is tRNA modification; N(7)-methylguanine-tRNA biosynthesis. Functionally, catalyzes the formation of N(7)-methylguanine at position 46 (m7G46) in tRNA. This Burkholderia pseudomallei (strain 1710b) protein is tRNA (guanine-N(7)-)-methyltransferase.